We begin with the raw amino-acid sequence, 354 residues long: Ornithine carbamoyltransferase, catabolic (354 aa).

Carbamoyl phosphate contacts are provided by residues 67 to 70, Q94, R118, and 145 to 148; these read STRT and HPTQ. L-ornithine is bound by residues N177, D241, and 245-246; that span reads SM. Carbamoyl phosphate is bound by residues 284–285 and R329; that span reads CL.

It belongs to the aspartate/ornithine carbamoyltransferase superfamily. OTCase family.

Its subcellular location is the cytoplasm. The enzyme catalyses carbamoyl phosphate + L-ornithine = L-citrulline + phosphate + H(+). It functions in the pathway amino-acid degradation; L-arginine degradation via ADI pathway; carbamoyl phosphate from L-arginine: step 2/2. Functionally, reversibly catalyzes the transfer of the carbamoyl group from carbamoyl phosphate (CP) to the N(epsilon) atom of ornithine (ORN) to produce L-citrulline. This is Ornithine carbamoyltransferase, catabolic (arcB) from Lactococcus lactis subsp. cremoris (strain MG1363).